A 1349-amino-acid chain; its full sequence is Zinc finger protein 804B (1349 aa).

Residues 55 to 79 (FYCELCDKQYHKHQEFDNHINSYDH) form a C2H2-type zinc finger. The tract at residues 985-1010 (YASESRNDQDSAIPRTTEKDKSKSSH) is disordered.

In Homo sapiens (Human), this protein is Zinc finger protein 804B (ZNF804B).